The following is a 453-amino-acid chain: Ribosome biogenesis protein SSF1 (453 aa).

The span at 1–11 (MAKRRQKKRTH) shows a compositional bias: basic residues. 3 disordered regions span residues 1-22 (MAKR…EQGI), 275-324 (KAKH…PRKK), and 374-453 (KMRL…SEVE). Positions 26–348 (MVIRVGQTSL…LVKIEEGICS (323 aa)) constitute a Brix domain. Over residues 288 to 300 (PVEKKDNKEREKE) the composition is skewed to basic and acidic residues. The residue at position 301 (Thr301) is a Phosphothreonine. Residues 374–398 (KMRLKEQRKKEQEENIAKKKAVKDA) are compositionally biased toward basic and acidic residues. A compositionally biased stretch (basic residues) spans 399–409 (KKQRKLERRKA). Over residues 410 to 423 (RAAEGGEGQGKDDA) the composition is skewed to basic and acidic residues. Residues 442–453 (EDLDSDLFSEVE) show a composition bias toward acidic residues.

Part of a complex that includes BRX1, RPF1, RPF2 and SSF1 or SSF2.

Its subcellular location is the nucleus. The protein localises to the nucleolus. Functionally, required for biogenesis of the 60S ribosomal subunit. The polypeptide is Ribosome biogenesis protein SSF1 (SSF1) (Saccharomyces cerevisiae (strain ATCC 204508 / S288c) (Baker's yeast)).